The primary structure comprises 366 residues: ACP-SH:acetate ligase (366 aa).

The protein resides in the cytoplasm. The catalysed reaction is holo-[ACP] + acetate + ATP = acetyl-[ACP] + AMP + diphosphate. Its function is as follows. Acyl-carrier protein (ACP) acetate ligase of the biotin-dependent malonate decarboxylase multienzyme complex (EC 7.2.4.4). Involved in the conversion of the thiol group of the ACP-bound 2'-(5-phosphoribosyl)-3'-dephospho-CoA prosthetic group into its acetyl thioester using the energy from the hydrolysis of ATP. This Malonomonas rubra protein is ACP-SH:acetate ligase (madH).